Here is a 395-residue protein sequence, read N- to C-terminus: MSDINVVLAELKRGVDEVLSEADLIEKLKENRPLKIKLGADPTAPDIHLGHTVVLNKLRQFQNFGHEVIFLIGDFTGMVGDPSGKNKTRPPLSREDVLRNAETYKQQIYKILDPQKTRIVFNSDWLGKLGTEGMIRLASNYTVARMLERDDFKKRFTEKQPIAIHEFIYPLLQGHDSVALEADVELGGTDQKFNLLVGRELQKSAGQKPQVAMTLPLLVGLDGEKKMSKSLGNYIGVTDAPNDMFGKIMSISDDLMWDWYDLLSFRPLTEIAQFKEEVKNGRNPRDVKILLAKEIIARFHSEADADTAEQEFINRFQKGAMPDEMPEFTFEGEIGLANLLKEAGLVASTSEANRMVQQDGVKIDGEKVEDAKTTISASTHVYQVGKRKFARVTVR.

Residues 42-51 (PTAPDIHLGH) carry the 'HIGH' region motif. The 'KMSKS' region motif lies at 226–230 (KMSKS). K229 lines the ATP pocket. Residues 334–394 (IGLANLLKEA…GKRKFARVTV (61 aa)) enclose the S4 RNA-binding domain.

It belongs to the class-I aminoacyl-tRNA synthetase family. TyrS type 2 subfamily. In terms of assembly, homodimer.

It localises to the cytoplasm. It carries out the reaction tRNA(Tyr) + L-tyrosine + ATP = L-tyrosyl-tRNA(Tyr) + AMP + diphosphate + H(+). Catalyzes the attachment of tyrosine to tRNA(Tyr) in a two-step reaction: tyrosine is first activated by ATP to form Tyr-AMP and then transferred to the acceptor end of tRNA(Tyr). The chain is Tyrosine--tRNA ligase from Mannheimia succiniciproducens (strain KCTC 0769BP / MBEL55E).